We begin with the raw amino-acid sequence, 425 residues long: Histone-binding protein RBBP4 (425 aa).

A2 carries the N-acetylalanine modification. 7 WD repeats span residues 32–125 (YDLV…NHEG), 126–175 (EVNR…RLRG), 176–223 (HQKE…KTIF), 225–270 (GHTA…HSVD), 271–314 (AHTA…HSFE), 315–371 (SHKD…FIHG), and 372–404 (GHTAKISDFSWNPNEPWVICSVSEDNIMQVWQM). An interaction with HAT1 region spans residues 361 to 406 (DGPPELLFIHGGHTAKISDFSWNPNEPWVICSVSEDNIMQVWQMAE).

Belongs to the WD repeat RBAP46/RBAP48/MSI1 family. Binds directly to histone H4, probably via helix 1 of the histone fold, a region that is not accessible when histone H4 is in chromatin. Interacts with CHAF1A, HDAC1, HDAC2, HDAC3 and HIRA. May also interact with HAT1.

The protein resides in the nucleus. It is found in the chromosome. Its subcellular location is the telomere. Functionally, core histone-binding subunit that may target chromatin assembly factors, chromatin remodeling factors and histone deacetylases to their histone substrates in a manner that is regulated by nucleosomal DNA. Component of several complexes which regulate chromatin metabolism. The sequence is that of Histone-binding protein RBBP4 (RBBP4) from Gallus gallus (Chicken).